We begin with the raw amino-acid sequence, 140 residues long: uncharacterized protein (140 aa).

The tract at residues 80 to 115 (KNGTRRHALPSPLEGSFQPGRQIPPPQTPSTDPQTL) is disordered.

This is an uncharacterized protein from Homo sapiens (Human).